A 549-amino-acid polypeptide reads, in one-letter code: Glucose-6-phosphate isomerase (549 aa).

Catalysis depends on glutamate 353, which acts as the Proton donor. Catalysis depends on residues histidine 384 and lysine 513.

It belongs to the GPI family.

Its subcellular location is the cytoplasm. The catalysed reaction is alpha-D-glucose 6-phosphate = beta-D-fructose 6-phosphate. It functions in the pathway carbohydrate biosynthesis; gluconeogenesis. The protein operates within carbohydrate degradation; glycolysis; D-glyceraldehyde 3-phosphate and glycerone phosphate from D-glucose: step 2/4. Its function is as follows. Catalyzes the reversible isomerization of glucose-6-phosphate to fructose-6-phosphate. The sequence is that of Glucose-6-phosphate isomerase from Brucella suis (strain ATCC 23445 / NCTC 10510).